The chain runs to 134 residues: Large ribosomal subunit protein bL17 (134 aa).

It belongs to the bacterial ribosomal protein bL17 family. Part of the 50S ribosomal subunit. Contacts protein L32.

The chain is Large ribosomal subunit protein bL17 from Aromatoleum aromaticum (strain DSM 19018 / LMG 30748 / EbN1) (Azoarcus sp. (strain EbN1)).